The primary structure comprises 242 residues: Pyridoxine 5'-phosphate synthase (242 aa).

Asn6 provides a ligand contact to 3-amino-2-oxopropyl phosphate. Position 8–9 (8–9 (DH)) interacts with 1-deoxy-D-xylulose 5-phosphate. Arg17 contacts 3-amino-2-oxopropyl phosphate. His42 acts as the Proton acceptor in catalysis. Residues Arg44 and His49 each coordinate 1-deoxy-D-xylulose 5-phosphate. Residue Glu69 is the Proton acceptor of the active site. Thr99 is a binding site for 1-deoxy-D-xylulose 5-phosphate. The active-site Proton donor is the His190. 3-amino-2-oxopropyl phosphate-binding positions include Gly191 and 212–213 (GH).

This sequence belongs to the PNP synthase family. In terms of assembly, homooctamer; tetramer of dimers.

It localises to the cytoplasm. The catalysed reaction is 3-amino-2-oxopropyl phosphate + 1-deoxy-D-xylulose 5-phosphate = pyridoxine 5'-phosphate + phosphate + 2 H2O + H(+). The protein operates within cofactor biosynthesis; pyridoxine 5'-phosphate biosynthesis; pyridoxine 5'-phosphate from D-erythrose 4-phosphate: step 5/5. Its function is as follows. Catalyzes the complicated ring closure reaction between the two acyclic compounds 1-deoxy-D-xylulose-5-phosphate (DXP) and 3-amino-2-oxopropyl phosphate (1-amino-acetone-3-phosphate or AAP) to form pyridoxine 5'-phosphate (PNP) and inorganic phosphate. The polypeptide is Pyridoxine 5'-phosphate synthase (Neisseria meningitidis serogroup C).